Here is a 257-residue protein sequence, read N- to C-terminus: Pimeloyl-[acyl-carrier protein] methyl ester esterase (257 aa).

The region spanning 16-240 (LVLIHGWGMN…EQASHAPFIS (225 aa)) is the AB hydrolase-1 domain. Substrate contacts are provided by residues Trp-22, 82–83 (SL), and 143–147 (FMALQ). Ser-82 (nucleophile) is an active-site residue. Residues Asp-207 and His-235 contribute to the active site. His-235 is a substrate binding site.

The protein belongs to the AB hydrolase superfamily. Carboxylesterase BioH family. In terms of assembly, monomer.

It localises to the cytoplasm. The catalysed reaction is 6-carboxyhexanoyl-[ACP] methyl ester + H2O = 6-carboxyhexanoyl-[ACP] + methanol + H(+). It participates in cofactor biosynthesis; biotin biosynthesis. The physiological role of BioH is to remove the methyl group introduced by BioC when the pimeloyl moiety is complete. It allows to synthesize pimeloyl-ACP via the fatty acid synthetic pathway through the hydrolysis of the ester bonds of pimeloyl-ACP esters. This Aliivibrio fischeri (strain MJ11) (Vibrio fischeri) protein is Pimeloyl-[acyl-carrier protein] methyl ester esterase.